The sequence spans 244 residues: Secreted RxLR effector protein RXLR-C05 (244 aa).

The first 21 residues, 1 to 21 (MRGAFYVATAFLIASSTRTAA), serve as a signal peptide directing secretion. Residues 37–46 (LPVGDSDTKS) are compositionally biased toward basic and acidic residues. The disordered stretch occupies residues 37–56 (LPVGDSDTKSLPRRSLKGSG). A RxLR-dEER motif is present at residues 50 to 68 (RSLKGSGDRLEIPVAEEER).

The protein belongs to the RxLR effector family.

The protein resides in the secreted. The protein localises to the host cytoplasm. Its subcellular location is the host nucleus. Secreted effector that suppresses pattern-triggered immunity (PTI) in plant host. This Plasmopara halstedii (Downy mildew of sunflower) protein is Secreted RxLR effector protein RXLR-C05.